The primary structure comprises 235 residues: NAD(P)H-quinone oxidoreductase subunit K, chloroplastic (235 aa).

Positions 43, 44, 108, and 139 each coordinate [4Fe-4S] cluster.

It belongs to the complex I 20 kDa subunit family. NDH is composed of at least 16 different subunits, 5 of which are encoded in the nucleus. [4Fe-4S] cluster serves as cofactor.

The protein resides in the plastid. The protein localises to the chloroplast thylakoid membrane. It carries out the reaction a plastoquinone + NADH + (n+1) H(+)(in) = a plastoquinol + NAD(+) + n H(+)(out). The enzyme catalyses a plastoquinone + NADPH + (n+1) H(+)(in) = a plastoquinol + NADP(+) + n H(+)(out). In terms of biological role, NDH shuttles electrons from NAD(P)H:plastoquinone, via FMN and iron-sulfur (Fe-S) centers, to quinones in the photosynthetic chain and possibly in a chloroplast respiratory chain. The immediate electron acceptor for the enzyme in this species is believed to be plastoquinone. Couples the redox reaction to proton translocation, and thus conserves the redox energy in a proton gradient. This is NAD(P)H-quinone oxidoreductase subunit K, chloroplastic from Ipomoea purpurea (Common morning glory).